A 145-amino-acid polypeptide reads, in one-letter code: UPF0179 protein MmarC7_0952 (145 aa).

The protein belongs to the UPF0179 family.

The polypeptide is UPF0179 protein MmarC7_0952 (Methanococcus maripaludis (strain C7 / ATCC BAA-1331)).